The primary structure comprises 127 residues: uncharacterized protein (127 aa).

This is an uncharacterized protein from Homo sapiens (Human).